Here is a 30-residue protein sequence, read N- to C-terminus: Kalata-B5 (30 aa).

The segment at residues 1–30 is a cross-link (cyclopeptide (Gly-Asn)); sequence GTPCGESCVYIPCISGVIGCSCTDKVCYLN. 3 cysteine pairs are disulfide-bonded: Cys-4/Cys-20, Cys-8/Cys-22, and Cys-13/Cys-27.

Post-translationally, this is a cyclic peptide.

Probably participates in a plant defense mechanism. This chain is Kalata-B5, found in Oldenlandia affinis.